Consider the following 258-residue polypeptide: DNA-directed RNA polymerase subunit Rpo3 (258 aa).

It belongs to the archaeal Rpo3/eukaryotic RPB3 RNA polymerase subunit family. Part of the RNA polymerase complex.

The protein localises to the cytoplasm. The catalysed reaction is RNA(n) + a ribonucleoside 5'-triphosphate = RNA(n+1) + diphosphate. In terms of biological role, DNA-dependent RNA polymerase (RNAP) catalyzes the transcription of DNA into RNA using the four ribonucleoside triphosphates as substrates. In Pyrobaculum calidifontis (strain DSM 21063 / JCM 11548 / VA1), this protein is DNA-directed RNA polymerase subunit Rpo3.